The chain runs to 246 residues: MKYDIIGDIHGCLQEFQNLTEKLGYNWSSGLPVHPDQRKLAFVGDITDRGPHSLRMIEIVWELVIHKKEAYYAPGNHCNKLYRFFLGRNVTVAHGLETTVAEYEALPSHKQNMIKEKFITLYEQSPLYHVLDEKRLLVCHAGIRQDYIGRQDKKVQTFVLYGDITGEKHADGSPVRRDWAKEYKGTAWIVYGHTPVKEPRFVNHTVNIDTGAVFGGRLTALRYPEMETVSVPSSLPFVPEKFRPIS.

Belongs to the PrpE family. It depends on Ni(2+) as a cofactor.

It carries out the reaction P(1),P(4)-bis(5'-guanosyl) tetraphosphate + H2O = GMP + GTP + 2 H(+). Asymmetrically hydrolyzes Ap4p to yield AMP and ATP. The polypeptide is Bis(5'-nucleosyl)-tetraphosphatase PrpE [asymmetrical] (Bacillus thuringiensis (strain Al Hakam)).